The sequence spans 139 residues: Non-structural protein 1 (139 aa).

The short motif at 136–139 (DLNS) is the DLNP; interaction with MAP1B element.

This sequence belongs to the pneumovirus non-structural protein 1 family. Monomer. Homomultimer. Heteromultimer with NS2. Interacts with the matrix protein M. Interacts with host ELOC and CUL2; this interaction allows NS1 to form an active E3 ligase with ELOC and CUL2. Interacts with host IRF3; this interaction leads to the disrupted association of IRF3 with CREBBP and thus reduced binding of IRF3 to the IFN-beta promoter. Interacts with host MAVS; this interaction prevents MAVS binding to RIGI and inhibits signaling pathway leading to interferon production. Interacts with host MAP1B/microtubule-associated protein 1B. Interacts with host TRIM25 (via SPRY domain); this interaction suppresses RIGI ubiquitination and results in decreased interaction between RIGI and MAVS.

Its subcellular location is the host cytoplasm. The protein localises to the host mitochondrion. The protein resides in the host nucleus. In terms of biological role, plays a major role in antagonizing the type I IFN-mediated antiviral response by degrading or inhibiting multiple cellular factors required for either IFN induction or response pathways. Acts cooperatively with NS2 to repress activation and nuclear translocation of host IFN-regulatory factor IRF3. Also disrupts the association of IRF3 with CREBBP. Interacts with host mitochondrial-associated membrane (MAM) MAVS and prevents the interaction with RIGI. Interacts with TRIM25 to suppress TRIM25-mediated RIGI ubiquitination and thereby RIGI-MAVS interaction. Together with NS2, participates in the proteasomal degradation of host STAT2, IRF3, IRF7, TBK1 and RIGI through a NS-degradasome involving CUL2 and Elongin-C. The degradasome requires an intact mitochondrial MAVS. Decreases the levels of host TRAF3 and IKBKE/IKK-epsilon. As functions other than disruptions of the type I IFN-mediated antiviral signaling pathways, induces host SOCS1 and SOCS3 expression. Suppresses premature apoptosis by an NF-kappa-B-dependent, interferon-independent mechanism and thus facilitates virus growth. Additionally, NS1 may serve some inhibitory role in viral transcription and RNA replication. Suppresses proliferation and activation of host CD103+ CD8+ cytotoxic T-lymphocytes and Th17 helper T-lymphocytes. In Homo sapiens (Human), this protein is Non-structural protein 1 (1C).